Consider the following 280-residue polypeptide: uncharacterized protein (280 aa).

Residues 1 to 10 (MSSSIKKLKK) show a composition bias toward basic residues. The disordered stretch occupies residues 1–45 (MSSSIKKLKKDTKDTDKTPSKKIYQETHNSEDSEDSEDSDNENNT). Residues 11-31 (DTKDTDKTPSKKIYQETHNSE) show a composition bias toward basic and acidic residues. Acidic residues predominate over residues 32–41 (DSEDSEDSDN).

This is an uncharacterized protein from Acanthamoeba polyphaga mimivirus (APMV).